Here is a 375-residue protein sequence, read N- to C-terminus: Solute carrier family 35 member F2 (375 aa).

Methionine 1 carries the post-translational modification N-acetylmethionine. Phosphoserine occurs at positions 5, 22, 25, and 28. 10 helical membrane passes run 39–59, 73–93, 108–126, 136–156, 165–185, 195–215, 227–247, 263–283, 290–310, and 314–334; these read ILKTIALGQMLSLCICGTAIT, MLQSFINYCLLFLVYTLMLAF, WWKYTLLGLADVEANYLIV, SVQLLDCFGIPVLMALSWFIL, FIAVFVCLLGVGTMVGADILA, VLIGDILVLLGASLYAVSNVC, EFLGMVGLFGTIISGIQLLIV, LLFVAFALCMFCLYSFMPLVI, SVNLGILTADLYSLFFGLFLF, and FSGLYILSFTVIMVGFILYCS. Phosphoserine is present on serine 372.

This sequence belongs to the SLC35F solute transporter family.

The protein localises to the membrane. Putative solute transporter. The polypeptide is Solute carrier family 35 member F2 (Slc35f2) (Mus musculus (Mouse)).